A 466-amino-acid chain; its full sequence is Soluble pyridine nucleotide transhydrogenase (466 aa).

36–45 is an FAD binding site; sequence ERYHNVGGGC.

This sequence belongs to the class-I pyridine nucleotide-disulfide oxidoreductase family. The cofactor is FAD.

It is found in the cytoplasm. It carries out the reaction NAD(+) + NADPH = NADH + NADP(+). Functionally, conversion of NADPH, generated by peripheral catabolic pathways, to NADH, which can enter the respiratory chain for energy generation. The chain is Soluble pyridine nucleotide transhydrogenase from Klebsiella pneumoniae subsp. pneumoniae (strain ATCC 700721 / MGH 78578).